A 168-amino-acid chain; its full sequence is Protein-export protein SecB (168 aa).

Belongs to the SecB family. As to quaternary structure, homotetramer, a dimer of dimers. One homotetramer interacts with 1 SecA dimer.

It is found in the cytoplasm. One of the proteins required for the normal export of preproteins out of the cell cytoplasm. It is a molecular chaperone that binds to a subset of precursor proteins, maintaining them in a translocation-competent state. It also specifically binds to its receptor SecA. The polypeptide is Protein-export protein SecB (Rhizobium meliloti (strain 1021) (Ensifer meliloti)).